The following is a 527-amino-acid chain: Eukaryotic translation initiation factor 2 subunit gamma (527 aa).

Positions 1–83 are disordered; sequence MSDLQDQEPS…GLPEQPLNPD (83 aa). Phosphothreonine is present on Thr60. In terms of domain architecture, tr-type G spans 98-307; the sequence is QATINIGTIG…IVKTIPVPPR (210 aa). A G1 region spans residues 107–114; the sequence is GHVAHGKS. Position 110-115 (110-115) interacts with GTP; it reads AHGKST. The segment at 135 to 139 is G2; that stretch reads NITIK. Residues 193 to 196 form a G3 region; the sequence is DCPG. 249 to 252 serves as a coordination point for GTP; it reads NKVD. The interval 249–252 is G4; the sequence is NKVD. Phosphoserine is present on Ser258. 284 to 286 is a binding site for GTP; it reads SAQ. The tract at residues 284 to 286 is G5; sequence SAQ. The interval 515–527 is interacts with CDC123; it reads ATIKKGTTLEPIA.

This sequence belongs to the TRAFAC class translation factor GTPase superfamily. Classic translation factor GTPase family. EIF2G subfamily. In terms of assembly, eukaryotic translation initiation factor 2 eIF2 is a heterotrimeric complex composed of an alpha, a beta and a gamma subunit. The factors eIF-1, eIF-1A, eIF-2, eIF-3, TIF5/eIF-5 and methionyl-tRNAi form a multifactor complex (MFC) that may bind to the 40S ribosome. Interacts (via C-terminus) with CDC123; the interaction is direct. Interacts with GCD1. Interacts with the eIF2B complex subunits GCD6 and GCD7. Interacts with methionyl-initiator methionine tRNA.

The protein localises to the cytoplasm. It localises to the cytosol. The enzyme catalyses GTP + H2O = GDP + phosphate + H(+). In terms of biological role, as a subunit of eukaryotic initiation factor 2 eIF2, involved in the early steps of protein synthesis. In the presence of GTP, eIF-2 forms a ternary complex with initiator tRNA Met-tRNAi and then recruits the 40S ribosomal complex and initiation factors eIF-1, eIF-1A and eIF-3 to form the 43S pre-initiation complex (43S PIC), a step that determines the rate of protein translation. The 43S PIC binds to mRNA and scans downstream to the initiation codon, where it forms a 48S initiation complex by codon-anticodon base pairing. This leads to the displacement of eIF-1 to allow GTPase-activating protein (GAP) eIF-5-mediated hydrolysis of eIF2-bound GTP. Hydrolysis of GTP and release of Pi, which makes GTP hydrolysis irreversible, causes the release of the eIF-2-GDP binary complex from the 40S subunit, an event that is essential for the subsequent joining of the 60S ribosomal subunit to form an elongation-competent 80S ribosome. In order for eIF-2 to recycle and catalyze another round of initiation, the GDP bound to eIF-2 must be exchanged with GTP by way of a reaction catalyzed by GDP-GTP exchange factor (GEF) eIF-2B. The chain is Eukaryotic translation initiation factor 2 subunit gamma (GCD11) from Saccharomyces cerevisiae (strain ATCC 204508 / S288c) (Baker's yeast).